The chain runs to 278 residues: HTH-type transcriptional activator RhaS (278 aa).

One can recognise an HTH araC/xylS-type domain in the interval 174 to 272 (NLLLAWLEDH…NWSPRDIRQG (99 aa)). DNA-binding regions (H-T-H motif) lie at residues 191–212 (DAVADQFSLSLRTLHRQLKQQT) and 239–262 (VTDIAYRCGFSDSNHFSTLFRREF).

Binds DNA as a dimer.

The protein localises to the cytoplasm. Its function is as follows. Activates expression of the rhaBAD and rhaT operons. The chain is HTH-type transcriptional activator RhaS from Escherichia coli O127:H6 (strain E2348/69 / EPEC).